A 204-amino-acid chain; its full sequence is 3,4-dihydroxy-2-butanone 4-phosphate synthase (204 aa).

Position 30 (Glu-30) interacts with Mg(2+). Position 34 (Asp-34) interacts with D-ribulose 5-phosphate. Cys-59 bears the S-glutathionyl cysteine mark. D-ribulose 5-phosphate-binding positions include Thr-85 and 142–146 (RRGHT). Residue His-145 coordinates Mg(2+).

Homodimer. It depends on Mg(2+) as a cofactor. Mn(2+) is required as a cofactor. Post-translationally, S-glutathionylation is reversible and dependent on a glutaredoxin.

It catalyses the reaction D-ribulose 5-phosphate = (2S)-2-hydroxy-3-oxobutyl phosphate + formate + H(+). It participates in cofactor biosynthesis; riboflavin biosynthesis; 2-hydroxy-3-oxobutyl phosphate from D-ribulose 5-phosphate: step 1/1. Its function is as follows. Catalyzes the conversion of D-ribulose 5-phosphate to formate and 3,4-dihydroxy-2-butanone 4-phosphate. This Candida albicans (strain SC5314 / ATCC MYA-2876) (Yeast) protein is 3,4-dihydroxy-2-butanone 4-phosphate synthase (RIB3).